The primary structure comprises 394 residues: Elongation factor Tu (394 aa).

In terms of domain architecture, tr-type G spans Lys-10–Arg-205. A G1 region spans residues Gly-19–Thr-26. Gly-19–Thr-26 contributes to the GTP binding site. Thr-26 is a Mg(2+) binding site. Positions Gly-60–Asn-64 are G2. The segment at Asp-81 to Gly-84 is G3. GTP contacts are provided by residues Asp-81–His-85 and Asn-136–Asp-139. A G4 region spans residues Asn-136–Asp-139. The tract at residues Ser-174 to Leu-176 is G5.

Belongs to the TRAFAC class translation factor GTPase superfamily. Classic translation factor GTPase family. EF-Tu/EF-1A subfamily. In terms of assembly, monomer.

It is found in the cytoplasm. The catalysed reaction is GTP + H2O = GDP + phosphate + H(+). GTP hydrolase that promotes the GTP-dependent binding of aminoacyl-tRNA to the A-site of ribosomes during protein biosynthesis. This is Elongation factor Tu from Bacteroides thetaiotaomicron (strain ATCC 29148 / DSM 2079 / JCM 5827 / CCUG 10774 / NCTC 10582 / VPI-5482 / E50).